We begin with the raw amino-acid sequence, 309 residues long: MVKIYAPASIGNVSVGFDVLGAAVSPVDGTLLGDCVSVTASDSFSLRNEGRFVSKLPDDPKENIVYQCWERFCQEMGKEIPVALVLEKNMPIGSGLGSSACSVVAGLMAMNEFCGKPLDKVTLLGMMGELEGRVSGSVHFDNVAPCYLGGMQLILEQPGYISQDVPGFDDWLWVMAYPGIKVSTAEARAILPAQYRRQDCIAHGRNLAGFIHACHTQQPSLAAKMMKDVIAEPYRTQLLPGFAAARQAAQDIGALACGISGSGPTLFAVCNDSETAQRMASWLQNHYLQNDEGFVHICRLDTAGARLLG.

Position 91–101 (91–101) interacts with ATP; the sequence is PIGSGLGSSAC.

Belongs to the GHMP kinase family. Homoserine kinase subfamily.

It localises to the cytoplasm. The enzyme catalyses L-homoserine + ATP = O-phospho-L-homoserine + ADP + H(+). It functions in the pathway amino-acid biosynthesis; L-threonine biosynthesis; L-threonine from L-aspartate: step 4/5. Catalyzes the ATP-dependent phosphorylation of L-homoserine to L-homoserine phosphate. The polypeptide is Homoserine kinase (Yersinia enterocolitica serotype O:8 / biotype 1B (strain NCTC 13174 / 8081)).